The following is a 152-amino-acid chain: SsrA-binding protein (152 aa).

The interval 122–152 is disordered; it reads KGKKNHDKRETEAARDWQRDKARLMKGDRGD. Residues 128–152 are compositionally biased toward basic and acidic residues; it reads DKRETEAARDWQRDKARLMKGDRGD.

This sequence belongs to the SmpB family.

It localises to the cytoplasm. In terms of biological role, required for rescue of stalled ribosomes mediated by trans-translation. Binds to transfer-messenger RNA (tmRNA), required for stable association of tmRNA with ribosomes. tmRNA and SmpB together mimic tRNA shape, replacing the anticodon stem-loop with SmpB. tmRNA is encoded by the ssrA gene; the 2 termini fold to resemble tRNA(Ala) and it encodes a 'tag peptide', a short internal open reading frame. During trans-translation Ala-aminoacylated tmRNA acts like a tRNA, entering the A-site of stalled ribosomes, displacing the stalled mRNA. The ribosome then switches to translate the ORF on the tmRNA; the nascent peptide is terminated with the 'tag peptide' encoded by the tmRNA and targeted for degradation. The ribosome is freed to recommence translation, which seems to be the essential function of trans-translation. The polypeptide is SsrA-binding protein (Caulobacter sp. (strain K31)).